A 202-amino-acid polypeptide reads, in one-letter code: Ras-related protein RABD2c (202 aa).

Residues 15-23 (GDSGVGKSC), 33-40 (YLDSYIST), 63-67 (DTAGQ), 121-124 (NKCD), and 151-153 (SAK) each bind GTP. Residues 37–45 (YISTIGVDF) carry the Effector region motif. Positions 174 to 202 (ASQPAGGSKPPTVQIRGQPVNQQSGCCSS) are disordered. Over residues 192–202 (PVNQQSGCCSS) the composition is skewed to polar residues. 2 S-geranylgeranyl cysteine lipidation sites follow: C199 and C200.

Belongs to the small GTPase superfamily. Rab family.

Its subcellular location is the cell membrane. The protein localises to the golgi apparatus. It localises to the trans-Golgi network membrane. It is found in the golgi apparatus membrane. Functionally, protein transport. Regulator of membrane traffic from the Golgi apparatus towards the endoplasmic reticulum (ER). This chain is Ras-related protein RABD2c (RABD2C), found in Arabidopsis thaliana (Mouse-ear cress).